The chain runs to 416 residues: Actin-like protein 9 (416 aa).

Residues 1–23 (MDPNQGNPLEPQDSPEIPKPSLN) form a disordered region.

It belongs to the actin family. In terms of assembly, interacts with ACTL7A.

The protein resides in the cytoplasmic vesicle. The protein localises to the secretory vesicle. It is found in the acrosome. Its subcellular location is the cytoplasm. It localises to the cytoskeleton. The protein resides in the perinuclear theca. Its function is as follows. Testis-specic protein that plays an important role in fusion of proacrosomal vesicles and perinuclear theca formation. The sequence is that of Actin-like protein 9 (ACTL9) from Bos taurus (Bovine).